Consider the following 689-residue polypeptide: DNA topoisomerase 1 (689 aa).

The Toprim domain maps to 3 to 113 (DNLVIVESPA…KENRVVFNEI (111 aa)). Residues Glu9 and Asp82 each coordinate Mg(2+). A Topo IA-type catalytic domain is found at 129 to 557 (EMNLVDAQQA…FFSSFKQDVE (429 aa)). The segment at 163-168 (SAGRVQ) is interaction with DNA. Tyr298 functions as the O-(5'-phospho-DNA)-tyrosine intermediate in the catalytic mechanism. Residues 328-357 (SKRKASGKQGDQDAHEAIRPSSTMRTPDDM) are disordered. 3 C4-type zinc fingers span residues 577–603 (CEVCGSPMVIKMGRYGKFMACSNFPDC), 617–645 (CPKCNDGDVVERKSKKNRVFYGCSKYPEC), and 658–681 (CPKCNQYLVENKKGKTTQVICSNC).

This sequence belongs to the type IA topoisomerase family. Monomer. Mg(2+) is required as a cofactor.

The enzyme catalyses ATP-independent breakage of single-stranded DNA, followed by passage and rejoining.. In terms of biological role, releases the supercoiling and torsional tension of DNA, which is introduced during the DNA replication and transcription, by transiently cleaving and rejoining one strand of the DNA duplex. Introduces a single-strand break via transesterification at a target site in duplex DNA. The scissile phosphodiester is attacked by the catalytic tyrosine of the enzyme, resulting in the formation of a DNA-(5'-phosphotyrosyl)-enzyme intermediate and the expulsion of a 3'-OH DNA strand. The free DNA strand then undergoes passage around the unbroken strand, thus removing DNA supercoils. Finally, in the religation step, the DNA 3'-OH attacks the covalent intermediate to expel the active-site tyrosine and restore the DNA phosphodiester backbone. The protein is DNA topoisomerase 1 of Staphylococcus aureus (strain bovine RF122 / ET3-1).